Here is a 234-residue protein sequence, read N- to C-terminus: Multicopy suppressor of SEC21 protein 27 (234 aa).

Topologically, residues 1–47 are cytoplasmic; it reads MQTPLESTDVKLDTLNEPSAHLIEKNVALPKDIFRSYLSYWIYEIAR. Threonine 3 is modified (phosphothreonine). A helical transmembrane segment spans residues 48 to 68; that stretch reads YTPVMILSLVIGVLVLLIIFF. Over 69–72 the chain is Extracellular; sequence NDNE. Residues 73–93 traverse the membrane as a helical segment; the sequence is ACVFNSAYYAYLSLVVLLIIL. At 94–234 the chain is on the cytoplasmic side; sequence GDGNPKLVSR…NIDALLKKTE (141 aa). A COPI binding region spans residues 231 to 234; that stretch reads KKTE.

It belongs to the DUP/COS family. In terms of assembly, interacts with MST28. Binds to coatomer proteins of COPI and SEC23/SEC24 of COPII coated vesicles.

Its subcellular location is the endoplasmic reticulum. It is found in the golgi apparatus. The protein resides in the cytoplasmic vesicle. The protein localises to the COPI-coated vesicle membrane. It localises to the COPII-coated vesicle membrane. Involved in protein trafficking vesicle formation, probably by stabilizing of coatomer at the Golgi membrane and thus allowing the efficient formation of COPI coated vesicles. The protein is Multicopy suppressor of SEC21 protein 27 (MST27) of Saccharomyces cerevisiae (strain ATCC 204508 / S288c) (Baker's yeast).